Reading from the N-terminus, the 459-residue chain is LETM1 domain-containing protein LETM2, mitochondrial (459 aa).

A mitochondrion-targeting transit peptide spans 1-25; the sequence is MAFYSYNSFLAIFWTRLPGHSVHPP. Over 26 to 176 the chain is Mitochondrial intermembrane; it reads CSHFPPLAFF…LLRTCADVFR (151 aa). Residues 88–114 form a disordered region; sequence GKPQPEQIPEEPKATDPQPTKDDQTEV. The segment covering 97–111 has biased composition (basic and acidic residues); the sequence is EEPKATDPQPTKDDQ. The chain crosses the membrane as a helical span at residues 177–197; the sequence is LVPFVVFIIVPFMEFLIPVFL. At 198–459 the chain is on the mitochondrial matrix side; that stretch reads KLFPDMLPST…QNSKANSKGA (262 aa). A Letm1 RBD domain is found at 220-440; sequence KMMGAKLEIA…PAPQLNGTKI (221 aa). A disordered region spans residues 403–459; that stretch reads LPPSIETPKTNLGIPSSPPPESKEDITDPAPQLNGTKILQAKSQETSQNSKANSKGA. Residues 435–459 show a composition bias toward polar residues; that stretch reads LNGTKILQAKSQETSQNSKANSKGA.

Testis and sperm.

The protein resides in the mitochondrion inner membrane. In Rattus norvegicus (Rat), this protein is LETM1 domain-containing protein LETM2, mitochondrial (Letm2).